The following is an 81-amino-acid chain: MNRKLLLVFLVVAMLVMQPAEAGFWSKIKDFAKKAWNSPLANELKSKALNAAKNFVSEKIGATPSEAGQIPFDEFMDVLYS.

The signal sequence occupies residues 1–22 (MNRKLLLVFLVVAMLVMQPAEA). A propeptide spanning residues 66–81 (EAGQIPFDEFMDVLYS) is cleaved from the precursor.

Belongs to the non-disulfide-bridged peptide (NDBP) superfamily. Long chain multifunctional peptide (group 2) family. Expressed by the venom gland.

The protein resides in the secreted. It is found in the target cell membrane. In terms of biological role, at high concentrations, acts as a pore former in cellular membranes and causes the leakage of the cells. At submicromolar concentrations, degranulates granulocytes and has a weak hemolytic activity against human erythrocytes. Also strongly inhibits the production of superoxide anions. Has a strong antibacterial activity against Gram-negative bacteria but is less active against Gram-positive bacteria. Also has antifungal activity. The sequence is that of Probable antimicrobial peptide Con13 from Opisthacanthus cayaporum (South American scorpion).